The primary structure comprises 304 residues: Methionyl-tRNA formyltransferase (304 aa).

110–113 (SLLP) provides a ligand contact to (6S)-5,6,7,8-tetrahydrofolate.

This sequence belongs to the Fmt family.

The catalysed reaction is L-methionyl-tRNA(fMet) + (6R)-10-formyltetrahydrofolate = N-formyl-L-methionyl-tRNA(fMet) + (6S)-5,6,7,8-tetrahydrofolate + H(+). In terms of biological role, attaches a formyl group to the free amino group of methionyl-tRNA(fMet). The formyl group appears to play a dual role in the initiator identity of N-formylmethionyl-tRNA by promoting its recognition by IF2 and preventing the misappropriation of this tRNA by the elongation apparatus. In Gluconobacter oxydans (strain 621H) (Gluconobacter suboxydans), this protein is Methionyl-tRNA formyltransferase.